We begin with the raw amino-acid sequence, 515 residues long: Protein FAM98A (515 aa).

Disordered regions lie at residues 297–410 (VLMG…GYHG) and 432–515 (SGYQ…HYTS). Residues 302–311 (VPDRGGRPNE) are compositionally biased toward basic and acidic residues. The span at 382-394 (WTDGGSGSGGGYQ) shows a compositional bias: gly residues. Residues 444–456 (RYQDGGHHGERGS) show a composition bias toward basic and acidic residues. Positions 457–481 (GRGGRGGRGGRGGRGSQGGGWGGRG) are enriched in gly residues. A compositionally biased stretch (low complexity) spans 485-501 (YHQGGQFEQHFQHGGYQ). Polar residues predominate over residues 502 to 515 (YSHSGFGQGRHYTS).

This sequence belongs to the FAM98 family. In terms of assembly, interacts (via N- and C-terminus) with DDX1. Interacts (via N- and C-terminus) with C14orf166. Interacts with FAM98B. Interacts with PLEKHM1 (via N- and C-terminus).

Positively stimulates PRMT1-induced protein arginine methylation. Involved in skeletal homeostasis. Positively regulates lysosome peripheral distribution and ruffled border formation in osteoclasts. The protein is Protein FAM98A of Mus musculus (Mouse).